The following is a 244-amino-acid chain: Rho-related GTP-binding protein RhoE (244 aa).

30–37 (GDSQCGKT) is a binding site for GTP. The Effector region signature appears at 52–60 (YVPTVFENY). GTP-binding positions include 77–81 (DTSGS) and 135–138 (CKSD). A Cysteine methyl ester modification is found at C241. The S-farnesyl cysteine moiety is linked to residue C241. Positions 242-244 (TVM) are cleaved as a propeptide — removed in mature form.

Belongs to the small GTPase superfamily. Rho family. Binds ROCK1. Interacts with UBXD5. In terms of tissue distribution, ubiquitous.

The protein resides in the golgi apparatus membrane. In terms of biological role, binds GTP but lacks intrinsic GTPase activity and is resistant to Rho-specific GTPase-activating proteins. This chain is Rho-related GTP-binding protein RhoE (RND3), found in Homo sapiens (Human).